The primary structure comprises 406 residues: Probable tRNA sulfurtransferase (406 aa).

Residues Asp60–Thr166 enclose the THUMP domain. ATP contacts are provided by residues Met184–Met185, His209–Phe210, Arg266, Gly288, and Gln297.

The protein belongs to the ThiI family.

Its subcellular location is the cytoplasm. It catalyses the reaction [ThiI sulfur-carrier protein]-S-sulfanyl-L-cysteine + a uridine in tRNA + 2 reduced [2Fe-2S]-[ferredoxin] + ATP + H(+) = [ThiI sulfur-carrier protein]-L-cysteine + a 4-thiouridine in tRNA + 2 oxidized [2Fe-2S]-[ferredoxin] + AMP + diphosphate. The catalysed reaction is [ThiS sulfur-carrier protein]-C-terminal Gly-Gly-AMP + S-sulfanyl-L-cysteinyl-[cysteine desulfurase] + AH2 = [ThiS sulfur-carrier protein]-C-terminal-Gly-aminoethanethioate + L-cysteinyl-[cysteine desulfurase] + A + AMP + 2 H(+). It functions in the pathway cofactor biosynthesis; thiamine diphosphate biosynthesis. Functionally, catalyzes the ATP-dependent transfer of a sulfur to tRNA to produce 4-thiouridine in position 8 of tRNAs, which functions as a near-UV photosensor. Also catalyzes the transfer of sulfur to the sulfur carrier protein ThiS, forming ThiS-thiocarboxylate. This is a step in the synthesis of thiazole, in the thiamine biosynthesis pathway. The sulfur is donated as persulfide by IscS. The sequence is that of Probable tRNA sulfurtransferase from Limosilactobacillus reuteri subsp. reuteri (strain JCM 1112) (Lactobacillus reuteri).